A 203-amino-acid chain; its full sequence is VEL1-related protein SPBPB2B2.15 (203 aa).

Residues 1–16 form the signal peptide; that stretch reads MFKNLIFLFFIGLATA.

Belongs to the VEL1 family.

It is found in the cytoplasm. It localises to the cytosol. The protein is VEL1-related protein SPBPB2B2.15 of Schizosaccharomyces pombe (strain 972 / ATCC 24843) (Fission yeast).